The chain runs to 622 residues: Iron transport multicopper oxidase FET5 (622 aa).

The N-terminal stretch at 1 to 18 (MLFYSFVWSVLAASVALA) is a signal peptide. The Extracellular portion of the chain corresponds to 19–573 (KTHKLNYTAS…PKGFTTEGYL (555 aa)). An N-linked (GlcNAc...) asparagine glycan is attached at Asn24. Plastocyanin-like domains follow at residues 43 to 146 (IGFN…FIIH) and 192 to 301 (NILF…IQMR). 2 residues coordinate Cu cation: His79 and His81. N-linked (GlcNAc...) asparagine glycans are attached at residues Asn86 and Asn115. His128 and His130 together coordinate Cu cation. Asn196, Asn200, Asn246, Asn295, and Asn364 each carry an N-linked (GlcNAc...) asparagine glycan. Positions 392–514 (GDNINAQLLK…QGLASVFIEA (123 aa)) constitute a Plastocyanin-like 3 domain. Cu cation-binding residues include His418, His421, and His423. The N-linked (GlcNAc...) asparagine glycan is linked to Asn455. Cu cation-binding residues include His496, Cys497, His498, and His502. The helical transmembrane segment at 574-594 (ALIISTIIGVWGLYSIAQYGI) threads the bilayer. The Cytoplasmic segment spans residues 595–622 (GEVIPNDEKVYHTLREILAENEIEVSRG).

Belongs to the multicopper oxidase family. In terms of assembly, interacts with FTH1. The cofactor is Cu cation.

The protein resides in the cell membrane. Its function is as follows. Iron transport multicopper oxidase, which is required for Fe(2+) high affinity uptake. May be required to oxidize Fe(2+) and release it from the transporter. Essential component of copper-dependent iron transport. The chain is Iron transport multicopper oxidase FET5 (FET5) from Saccharomyces cerevisiae (strain ATCC 204508 / S288c) (Baker's yeast).